The following is a 364-amino-acid chain: Chaperone protein DnaJ 1 (364 aa).

Positions 7 to 71 (DYYEILGVNR…ERRSEYDAIL (65 aa)) constitute a J domain. The CR-type zinc finger occupies 124 to 200 (GCEKEIIYSR…CYGRGRVSAQ (77 aa)). Residues cysteine 137, cysteine 140, cysteine 154, cysteine 157, cysteine 174, cysteine 177, cysteine 188, and cysteine 191 each contribute to the Zn(2+) site. CXXCXGXG motif repeat units lie at residues 137 to 144 (CPVCEGMG), 154 to 161 (CHACNGEG), 174 to 181 (CSVCKGKG), and 188 to 195 (CPTCYGRG).

It belongs to the DnaJ family. Homodimer. The cofactor is Zn(2+).

Its subcellular location is the cytoplasm. Its function is as follows. Participates actively in the response to hyperosmotic and heat shock by preventing the aggregation of stress-denatured proteins and by disaggregating proteins, also in an autonomous, DnaK-independent fashion. Unfolded proteins bind initially to DnaJ; upon interaction with the DnaJ-bound protein, DnaK hydrolyzes its bound ATP, resulting in the formation of a stable complex. GrpE releases ADP from DnaK; ATP binding to DnaK triggers the release of the substrate protein, thus completing the reaction cycle. Several rounds of ATP-dependent interactions between DnaJ, DnaK and GrpE are required for fully efficient folding. Also involved, together with DnaK and GrpE, in the DNA replication of plasmids through activation of initiation proteins. The polypeptide is Chaperone protein DnaJ 1 (Aquifex aeolicus (strain VF5)).